We begin with the raw amino-acid sequence, 337 residues long: Cysteine proteinase 3 (337 aa).

A signal peptide spans 1 to 21; the sequence is MRLSITLIFTLIVLSISFISA. Positions 22–120 are cleaved as a propeptide — activation peptide; the sequence is GNVFSHKQYQ…GLRLNRPQFK (99 aa). 3 cysteine pairs are disulfide-bonded: C142-C185, C176-C219, and C277-C326. The active site involves C145. Residues H284 and N304 contribute to the active site.

This sequence belongs to the peptidase C1 family.

It localises to the lysosome. In Dictyostelium discoideum (Social amoeba), this protein is Cysteine proteinase 3 (cprC).